The following is a 282-amino-acid chain: Transformer-2 protein homolog alpha (282 aa).

Residues 1–118 are disordered; sequence MSDVEENNFE…TGSRANPDPN (118 aa). An N-acetylserine modification is found at Ser2. Phosphoserine occurs at positions 2 and 14. Thr24 is subject to Phosphothreonine. The span at 51 to 84 shows a compositional bias: basic residues; it reads RSRSKSRSRSRRHSHRRYTRSRSHSHSHRRRSRS. Ser82, Ser84, and Ser86 each carry phosphoserine. Thr88 carries the post-translational modification Phosphothreonine. Residues 92–110 show a composition bias toward basic residues; the sequence is RRRRSRSHSPMSNRRRHTG. Phosphoserine occurs at positions 96 and 98. The region spanning 119–197 is the RRM domain; the sequence is TCLGVFGLSL…RRIRVDYSIT (79 aa). A Glycyl lysine isopeptide (Lys-Gly) (interchain with G-Cter in SUMO2) cross-link involves residue Lys198. Residues 198-225 form a linker region; the sequence is KRAHTPTPGIYMGRPTHSGGGGGGGGGG. 2 disordered regions span residues 201 to 245 and 260 to 282; these read HTPT…YDRG and SPSPYYSRYRSRSRSRSYSPRRY. Thr202 and Thr204 each carry phosphothreonine. Residues 215 to 230 are compositionally biased toward gly residues; the sequence is SGGGGGGGGGGGGGGG. An Omega-N-methylarginine modification is found at Arg232. The span at 232–245 shows a compositional bias: basic and acidic residues; that stretch reads RRRDSYYDRGYDRG. Phosphoserine is present on Ser236. The span at 268 to 282 shows a compositional bias: basic residues; the sequence is YRSRSRSRSYSPRRY.

This sequence belongs to the splicing factor SR family. In terms of assembly, binds to A3 enhancer proteins SRp75, SRp55, SRp40 and SRp30. Interacts with ILDR1 (via C-terminus) and ILDR2. Post-translationally, phosphorylated in the RS domains.

The protein localises to the nucleus. Sequence-specific RNA-binding protein which participates in the control of pre-mRNA splicing. The polypeptide is Transformer-2 protein homolog alpha (Homo sapiens (Human)).